The chain runs to 341 residues: UPF0324 membrane protein SMU_2059c (341 aa).

The next 11 helical transmembrane spans lie at 7-24 (KLSG…AWFL), 28-47 (FPLV…LAIF), 68-85 (FAVV…VLTV), 90-107 (LPII…AFLL), 120-142 (LVGV…VIQA), 147-169 (IAQS…PTLG), 178-200 (GFAL…AAAW), 211-233 (GATI…LSFY), 254-276 (VFPM…TALG), 291-310 (FCIV…VKLV), and 317-339 (IVLG…HLLG).

This sequence belongs to the UPF0324 family.

The protein localises to the cell membrane. The sequence is that of UPF0324 membrane protein SMU_2059c from Streptococcus mutans serotype c (strain ATCC 700610 / UA159).